Reading from the N-terminus, the 101-residue chain is Acylphosphatase (101 aa).

The region spanning 11–99 (SWLVKAIGRV…PRLNRFDRLP (89 aa)) is the Acylphosphatase-like domain. Residues Arg-26 and Asn-44 contribute to the active site.

It belongs to the acylphosphatase family.

The catalysed reaction is an acyl phosphate + H2O = a carboxylate + phosphate + H(+). This is Acylphosphatase (acyP) from Polaromonas naphthalenivorans (strain CJ2).